A 240-amino-acid polypeptide reads, in one-letter code: Uridylate kinase (240 aa).

Residue K12–G15 coordinates ATP. Residue G54 coordinates UMP. The ATP site is built by G55 and R59. Residues D74 and T135 to T142 contribute to the UMP site. T162, Y168, and D171 together coordinate ATP.

This sequence belongs to the UMP kinase family. In terms of assembly, homohexamer.

The protein resides in the cytoplasm. The enzyme catalyses UMP + ATP = UDP + ADP. It participates in pyrimidine metabolism; CTP biosynthesis via de novo pathway; UDP from UMP (UMPK route): step 1/1. Inhibited by UTP. Its function is as follows. Catalyzes the reversible phosphorylation of UMP to UDP. The protein is Uridylate kinase of Xanthomonas euvesicatoria pv. vesicatoria (strain 85-10) (Xanthomonas campestris pv. vesicatoria).